A 136-amino-acid polypeptide reads, in one-letter code: Thiosulfate sulfurtransferase 18 (136 aa).

Residues 26 to 128 (LQSGHQYLDV…WVDHSFPINT (103 aa)) form the Rhodanese domain. Cys-88 functions as the Cysteine persulfide intermediate in the catalytic mechanism.

It is found in the cytoplasm. It catalyses the reaction thiosulfate + hydrogen cyanide = thiocyanate + sulfite + 2 H(+). Functionally, catalyzes the transfer of a sulfur ion from a donor to cyanide or to other thiol compounds. Substrate preference is thiosulfate &gt; 3-mercaptopyruvate. The sequence is that of Thiosulfate sulfurtransferase 18 (STR18) from Arabidopsis thaliana (Mouse-ear cress).